Here is a 139-residue protein sequence, read N- to C-terminus: MRITQGTFSFLPDLTDAQITSQLEYCLNQGWAVGIEYTDDPHPRNTYWEMFGLPMFDLRDAAGILLEINNARSTFPNHYIRVTAFDSTHTVESVVMSFIVNRPADEPGFRLVRQEEPGRTIRYSIESYAVQARPEGSRY.

Belongs to the RuBisCO small chain family. As to quaternary structure, heterohexadecamer of 8 large and 8 small subunits.

Its function is as follows. RuBisCO catalyzes two reactions: the carboxylation of D-ribulose 1,5-bisphosphate, the primary event in carbon dioxide fixation, as well as the oxidative fragmentation of the pentose substrate. Both reactions occur simultaneously and in competition at the same active site. Although the small subunit is not catalytic it is essential for maximal activity. The protein is Ribulose bisphosphate carboxylase small subunit, plasmid of Cupriavidus necator (strain ATCC 17699 / DSM 428 / KCTC 22496 / NCIMB 10442 / H16 / Stanier 337) (Ralstonia eutropha).